A 99-amino-acid chain; its full sequence is UPF0213 protein RBAM_000440 (99 aa).

The 76-residue stretch at 4–79 (NSHFFYVLLC…KQLTRKKKEQ (76 aa)) folds into the GIY-YIG domain.

The protein belongs to the UPF0213 family.

This chain is UPF0213 protein RBAM_000440, found in Bacillus velezensis (strain DSM 23117 / BGSC 10A6 / LMG 26770 / FZB42) (Bacillus amyloliquefaciens subsp. plantarum).